Consider the following 217-residue polypeptide: ATP-dependent Clp protease proteolytic subunit (217 aa).

Catalysis depends on Ser-119, which acts as the Nucleophile. His-144 is an active-site residue.

It belongs to the peptidase S14 family. Fourteen ClpP subunits assemble into 2 heptameric rings which stack back to back to give a disk-like structure with a central cavity, resembling the structure of eukaryotic proteasomes.

The protein resides in the cytoplasm. The catalysed reaction is Hydrolysis of proteins to small peptides in the presence of ATP and magnesium. alpha-casein is the usual test substrate. In the absence of ATP, only oligopeptides shorter than five residues are hydrolyzed (such as succinyl-Leu-Tyr-|-NHMec, and Leu-Tyr-Leu-|-Tyr-Trp, in which cleavage of the -Tyr-|-Leu- and -Tyr-|-Trp bonds also occurs).. In terms of biological role, cleaves peptides in various proteins in a process that requires ATP hydrolysis. Has a chymotrypsin-like activity. Plays a major role in the degradation of misfolded proteins. The polypeptide is ATP-dependent Clp protease proteolytic subunit (Bordetella petrii (strain ATCC BAA-461 / DSM 12804 / CCUG 43448)).